Reading from the N-terminus, the 1070-residue chain is Isoleucine--tRNA ligase (1070 aa).

Positions 50 to 60 (PYTSGAAHMGT) match the 'HIGH' region motif. A 'KMSKS' region motif is present at residues 606-610 (GMSKS). An ATP-binding site is contributed by Lys-609.

Belongs to the class-I aminoacyl-tRNA synthetase family. IleS type 2 subfamily. Monomer. The cofactor is Zn(2+).

It localises to the cytoplasm. It catalyses the reaction tRNA(Ile) + L-isoleucine + ATP = L-isoleucyl-tRNA(Ile) + AMP + diphosphate. Its function is as follows. Catalyzes the attachment of isoleucine to tRNA(Ile). As IleRS can inadvertently accommodate and process structurally similar amino acids such as valine, to avoid such errors it has two additional distinct tRNA(Ile)-dependent editing activities. One activity is designated as 'pretransfer' editing and involves the hydrolysis of activated Val-AMP. The other activity is designated 'posttransfer' editing and involves deacylation of mischarged Val-tRNA(Ile). The sequence is that of Isoleucine--tRNA ligase from Halobacterium salinarum (strain ATCC 700922 / JCM 11081 / NRC-1) (Halobacterium halobium).